The chain runs to 216 residues: Phosphoribosylaminoimidazole-succinocarboxamide synthase (216 aa).

The protein belongs to the SAICAR synthetase family.

It catalyses the reaction 5-amino-1-(5-phospho-D-ribosyl)imidazole-4-carboxylate + L-aspartate + ATP = (2S)-2-[5-amino-1-(5-phospho-beta-D-ribosyl)imidazole-4-carboxamido]succinate + ADP + phosphate + 2 H(+). It functions in the pathway purine metabolism; IMP biosynthesis via de novo pathway; 5-amino-1-(5-phospho-D-ribosyl)imidazole-4-carboxamide from 5-amino-1-(5-phospho-D-ribosyl)imidazole-4-carboxylate: step 1/2. The protein is Phosphoribosylaminoimidazole-succinocarboxamide synthase (purC) of Aquifex aeolicus (strain VF5).